The following is a 118-amino-acid chain: Vesicle-associated membrane protein 1 (118 aa).

Residues 1 to 15 are compositionally biased toward low complexity; it reads MSAPAQPPAEGTEGA. The segment at 1–36 is disordered; it reads MSAPAQPPAEGTEGAAPGGGPPGPPPNMTSNRRLQQ. Over 1 to 96 the chain is Cytoplasmic; the sequence is MSAPAQPPAE…KRKYWWKNCK (96 aa). The 61-residue stretch at 33 to 93 folds into the v-SNARE coiled-coil homology domain; the sequence is RLQQTQAQVE…AKLKRKYWWK (61 aa). The residue at position 63 (Ser-63) is a Phosphoserine. A helical; Anchor for type IV membrane protein membrane pass occupies residues 97 to 116; sequence MMIMLGAICAIIVVVIVIYF. At 117–118 the chain is on the vesicular side; it reads FT.

This sequence belongs to the synaptobrevin family. In terms of assembly, interacts with VAPA and VAPB. Post-translationally, (Microbial infection) Targeted and hydrolyzed by C.botulinum neurotoxin type X (BoNT/X) which hydrolyzes the 68-Arg-|-Ala-69 bond and probably inhibits neurotransmitter release. It remains unknown whether BoNT/X is ever produced, or what organisms it targets. As to expression, highly expressed in the zona incerta and rostral periolivary region of the brain. Other neuroanatomical regions show negligible expression. Expressed in the retina, expression observed in the outer segments of the photoreceptors, in the outer and inner plexiform layers, and in a subset of ganglion cells.

It localises to the cytoplasmic vesicle. The protein resides in the secretory vesicle. Its subcellular location is the synaptic vesicle membrane. The protein localises to the synapse. It is found in the synaptosome. It localises to the cytoplasmic vesicle membrane. Functionally, involved in the targeting and/or fusion of transport vesicles to their target membrane. This Mus musculus (Mouse) protein is Vesicle-associated membrane protein 1 (Vamp1).